The following is a 557-amino-acid chain: MRFSLLALVLLSSSYKFTYGSECGDSTIPYSLEVLSSGQPILGCARPTCFGWHSNGHQLPTNAKFFRIDQQSDGFLRDDPLAIHTFDAADPRVYAQQQASCEQEFQSLSCNPEDQWVGGIAPVMNASTTKIVAYKCCTYAPLRASIDRGVATVSGGQIVVGGEIFADNKPYAFDYISNVEKKIDSEGEIFYEVNIKRFSCLDLQKVDRSVPEILNSENTIRHVNGHRFVVHQAPTVDVETPVETGQLVVPQGVQNGQEVIIEEIVAQEGFVQETNPQPPPPPGQQGGFVQPQGFQPQGGFQPQGFQPQGFQPQAFQPQVVQNPVPAAPAGYAPMGFAPSGLQLYYCFPGDAMVNVYNGGFKRMDELAVGDWVQALDKNGSQVTFIPVQYWLHRDPKQVADFVEFTLDNGETFSLTEKHLVFVTQCSVPYSEDENINANPVPAERVNIGDCFYIAHRKKSQMYQRVKVLDINIVQKTGIYSPMTSRGHLLVDRIHASCHSETDNYSLQNTFFTNVLRWKSQIRNYFWTVEDSTNEDNIGYGLNGVMAVLDIVIPSKLM.

The first 20 residues, 1–20 (MRFSLLALVLLSSSYKFTYG), serve as a signal peptide directing secretion. The disordered stretch occupies residues 272–308 (QETNPQPPPPPGQQGGFVQPQGFQPQGGFQPQGFQPQ). A compositionally biased stretch (low complexity) spans 287-308 (GFVQPQGFQPQGGFQPQGFQPQ).

It belongs to the hedgehog family. Post-translationally, the C-terminal domain displays an autoproteolysis activity.

Its subcellular location is the secreted. The protein localises to the cell surface. It localises to the cell membrane. It is found in the extracellular space. In terms of biological role, intercellular signal essential for a variety of patterning events during development. The polypeptide is Warthog protein 4 (wrt-4) (Caenorhabditis elegans).